A 151-amino-acid chain; its full sequence is Large ribosomal subunit protein bL9 (151 aa).

The protein belongs to the bacterial ribosomal protein bL9 family.

Its function is as follows. Binds to the 23S rRNA. The polypeptide is Large ribosomal subunit protein bL9 (Francisella tularensis subsp. holarctica (strain LVS)).